The following is a 131-amino-acid chain: PDZ domain-containing protein C52A11.3 (131 aa).

A PDZ domain is found at 51–127; the sequence is LVKLQKDANR…RLYLQIARPH (77 aa).

The polypeptide is PDZ domain-containing protein C52A11.3 (Caenorhabditis elegans).